The primary structure comprises 168 residues: 6,7-dimethyl-8-ribityllumazine synthase (168 aa).

5-amino-6-(D-ribitylamino)uracil is bound by residues Phe24, 58–60, and 82–84; these read ALE and AVI. Residue 87-88 participates in (2S)-2-hydroxy-3-oxobutyl phosphate binding; it reads ET. The active-site Proton donor is the His90. Residue Asn115 participates in 5-amino-6-(D-ribitylamino)uracil binding. Arg129 provides a ligand contact to (2S)-2-hydroxy-3-oxobutyl phosphate.

This sequence belongs to the DMRL synthase family.

It catalyses the reaction (2S)-2-hydroxy-3-oxobutyl phosphate + 5-amino-6-(D-ribitylamino)uracil = 6,7-dimethyl-8-(1-D-ribityl)lumazine + phosphate + 2 H2O + H(+). It participates in cofactor biosynthesis; riboflavin biosynthesis; riboflavin from 2-hydroxy-3-oxobutyl phosphate and 5-amino-6-(D-ribitylamino)uracil: step 1/2. Functionally, catalyzes the formation of 6,7-dimethyl-8-ribityllumazine by condensation of 5-amino-6-(D-ribitylamino)uracil with 3,4-dihydroxy-2-butanone 4-phosphate. This is the penultimate step in the biosynthesis of riboflavin. This Paraburkholderia xenovorans (strain LB400) protein is 6,7-dimethyl-8-ribityllumazine synthase.